Here is a 672-residue protein sequence, read N- to C-terminus: Single-strand DNA endonuclease ASTE1 (672 aa).

Residues 349–398 (TFLHTQVENMQRPNAHRISQPIRQIIYGLLLNGPSHAEDIAQNTLPSQLL) are interaction with SHLD2.

Belongs to the asteroid family. Interacts with SHLD1, SHLD2, SHLD3, RIF1 and MAD2L2/REV7.

In terms of biological role, structure-specific DNA endonuclease that specifically cleaves single-stranded DNA and 3' overhang DNA. Contributes to the control of DNA double-strand break repair choice by antagonizing BRCA1-dependent homologous recombination (HR) and promoting non-homologous end-joining (NHEJ). Recruited to the single-stranded DNA ends by SHLD2 and cleaves the 3' exposed DNA ends, therefore inhibiting DNA end resection (necessary for HR) and promoting DNA end protection (necessary for NHEJ). This chain is Single-strand DNA endonuclease ASTE1 (Aste1), found in Mus musculus (Mouse).